Reading from the N-terminus, the 572-residue chain is Sulfite reductase [NADPH] hemoprotein beta-component (572 aa).

Positions 437, 443, 482, and 486 each coordinate [4Fe-4S] cluster. Residue Cys486 coordinates siroheme.

The protein belongs to the nitrite and sulfite reductase 4Fe-4S domain family. In terms of assembly, alpha(8)-beta(8). The alpha component is a flavoprotein, the beta component is a hemoprotein. Siroheme is required as a cofactor. Requires [4Fe-4S] cluster as cofactor.

The enzyme catalyses hydrogen sulfide + 3 NADP(+) + 3 H2O = sulfite + 3 NADPH + 4 H(+). It functions in the pathway sulfur metabolism; hydrogen sulfide biosynthesis; hydrogen sulfide from sulfite (NADPH route): step 1/1. Its function is as follows. Component of the sulfite reductase complex that catalyzes the 6-electron reduction of sulfite to sulfide. This is one of several activities required for the biosynthesis of L-cysteine from sulfate. This is Sulfite reductase [NADPH] hemoprotein beta-component from Bacillus licheniformis (strain ATCC 14580 / DSM 13 / JCM 2505 / CCUG 7422 / NBRC 12200 / NCIMB 9375 / NCTC 10341 / NRRL NRS-1264 / Gibson 46).